We begin with the raw amino-acid sequence, 235 residues long: Isopentenyl-diphosphate Delta-isomerase I (235 aa).

A substrate-binding site is contributed by Lys38. Mg(2+) is bound by residues His42 and His54. The 153-residue stretch at 52–204 (LLHRAFSVFL…GLKLSPWFRL (153 aa)) folds into the Nudix hydrolase domain. 2 residues coordinate substrate: Arg73 and Lys77. The active site involves Cys89. Ser90 is a binding site for substrate. Positions 149 and 151 each coordinate Mg(2+). The active site involves Glu151.

It belongs to the IPP isomerase type 1 family. It depends on Mg(2+) as a cofactor.

The catalysed reaction is isopentenyl diphosphate = dimethylallyl diphosphate. The protein operates within isoprenoid biosynthesis; dimethylallyl diphosphate biosynthesis; dimethylallyl diphosphate from isopentenyl diphosphate: step 1/1. It participates in porphyrin-containing compound metabolism; chlorophyll biosynthesis. Its function is as follows. Catalyzes the 1,3-allylic rearrangement of the homoallylic substrate isopentenyl (IPP) to its highly electrophilic allylic isomer, dimethylallyl diphosphate (DMAPP). The sequence is that of Isopentenyl-diphosphate Delta-isomerase I (IPI1) from Camptotheca acuminata (Happy tree).